We begin with the raw amino-acid sequence, 504 residues long: Facilitated trehalose transporter Tret1 (504 aa).

The Cytoplasmic portion of the chain corresponds to methionine 1 to tyrosine 39. Residues isoleucine 40 to alanine 60 form a helical membrane-spanning segment. The Extracellular portion of the chain corresponds to serine 61–serine 87. Asparagine 73 carries an N-linked (GlcNAc...) asparagine glycan. A helical membrane pass occupies residues tryptophan 88–isoleucine 108. Residues glutamate 109–threonine 120 lie on the Cytoplasmic side of the membrane. The chain crosses the membrane as a helical span at residues alanine 121 to leucine 141. At alanine 142–alanine 145 the chain is on the extracellular side. Residues leucine 146–valine 166 form a helical membrane-spanning segment. Topologically, residues glutamine 167–arginine 171 are cytoplasmic. The helical transmembrane segment at glycine 172 to alanine 192 threads the bilayer. The Extracellular portion of the chain corresponds to glycine 193 to serine 199. Asparagine 197 carries an N-linked (GlcNAc...) asparagine glycan. A helical membrane pass occupies residues glycine 200–proline 220. The Cytoplasmic portion of the chain corresponds to glutamate 221–proline 283. A helical transmembrane segment spans residues leucine 284–phenylalanine 304. Residues tyrosine 305–asparagine 320 are Extracellular-facing. Residues leucine 321–isoleucine 341 form a helical membrane-spanning segment. At aspartate 342–lysine 347 the chain is on the cytoplasmic side. Residues isoleucine 348–phenylalanine 368 traverse the membrane as a helical segment. The Extracellular segment spans residues tyrosine 369 to serine 387. A helical membrane pass occupies residues phenylalanine 388–glycine 408. Residues glutamate 409–threonine 424 lie on the Cytoplasmic side of the membrane. The chain crosses the membrane as a helical span at residues glycine 425–isoleucine 445. The Extracellular portion of the chain corresponds to glycine 446–histidine 448. The helical transmembrane segment at glycine 449–valine 469 threads the bilayer. Residues proline 470 to methionine 504 are Cytoplasmic-facing.

It belongs to the major facilitator superfamily. Sugar transporter (TC 2.A.1.1) family. Trehalose transporter subfamily. In terms of tissue distribution, highest expression in the fat body. Not expressed in other tissues including the midgut, muscle, and integuments after 24 hours of dehydration.

It is found in the cell membrane. Its function is as follows. High-capacity facilitative transporter for trehalose, required to induce anhydrobiosis. Anhydrobiotic larvae can survive almost complete dehydration. Does not transport maltose, sucrose or lactose. Mediates the bidirectional transfer of trehalose. Responsible for the transport of trehalose synthesized in the fat body and the incorporation of trehalose into other tissues that require a carbon source, thereby regulating trehalose levels in the hemolymph. This chain is Facilitated trehalose transporter Tret1, found in Polypedilum vanderplanki (Sleeping chironomid midge).